The primary structure comprises 113 residues: Large ribosomal subunit protein bL19 (113 aa).

The protein belongs to the bacterial ribosomal protein bL19 family.

This protein is located at the 30S-50S ribosomal subunit interface and may play a role in the structure and function of the aminoacyl-tRNA binding site. The chain is Large ribosomal subunit protein bL19 from Mycolicibacterium smegmatis (strain ATCC 700084 / mc(2)155) (Mycobacterium smegmatis).